The following is a 59-amino-acid chain: Large ribosomal subunit protein uL30 (59 aa).

It belongs to the universal ribosomal protein uL30 family. In terms of assembly, part of the 50S ribosomal subunit.

This chain is Large ribosomal subunit protein uL30, found in Edwardsiella ictaluri (strain 93-146).